A 72-amino-acid chain; its full sequence is Large ribosomal subunit protein uL29 (72 aa).

Belongs to the universal ribosomal protein uL29 family.

This chain is Large ribosomal subunit protein uL29, found in Prochlorococcus marinus subsp. pastoris (strain CCMP1986 / NIES-2087 / MED4).